A 287-amino-acid chain; its full sequence is Shikimate kinase (287 aa).

Position 87–97 (87–97) interacts with ATP; it reads PLASGLKSSSA.

The protein belongs to the GHMP kinase family. Archaeal shikimate kinase subfamily.

It localises to the cytoplasm. It carries out the reaction shikimate + ATP = 3-phosphoshikimate + ADP + H(+). Its pathway is metabolic intermediate biosynthesis; chorismate biosynthesis; chorismate from D-erythrose 4-phosphate and phosphoenolpyruvate: step 5/7. The polypeptide is Shikimate kinase (Methanococcoides burtonii (strain DSM 6242 / NBRC 107633 / OCM 468 / ACE-M)).